The sequence spans 409 residues: Dual-specificity RNA methyltransferase RlmN (409 aa).

Glutamate 126 (proton acceptor) is an active-site residue. In terms of domain architecture, Radical SAM core spans 132 to 373; sequence EEGRGTLCLS…NQAGYASPIR (242 aa). Residues cysteine 139 and cysteine 384 are joined by a disulfide bond. [4Fe-4S] cluster-binding residues include cysteine 146, cysteine 150, and cysteine 153. Residues 210–211, serine 242, 264–266, and asparagine 341 each bind S-adenosyl-L-methionine; these read GE and SLH. Cysteine 384 (S-methylcysteine intermediate) is an active-site residue.

It belongs to the radical SAM superfamily. RlmN family. It depends on [4Fe-4S] cluster as a cofactor.

It localises to the cytoplasm. The catalysed reaction is adenosine(2503) in 23S rRNA + 2 reduced [2Fe-2S]-[ferredoxin] + 2 S-adenosyl-L-methionine = 2-methyladenosine(2503) in 23S rRNA + 5'-deoxyadenosine + L-methionine + 2 oxidized [2Fe-2S]-[ferredoxin] + S-adenosyl-L-homocysteine. The enzyme catalyses adenosine(37) in tRNA + 2 reduced [2Fe-2S]-[ferredoxin] + 2 S-adenosyl-L-methionine = 2-methyladenosine(37) in tRNA + 5'-deoxyadenosine + L-methionine + 2 oxidized [2Fe-2S]-[ferredoxin] + S-adenosyl-L-homocysteine. In terms of biological role, specifically methylates position 2 of adenine 2503 in 23S rRNA and position 2 of adenine 37 in tRNAs. m2A2503 modification seems to play a crucial role in the proofreading step occurring at the peptidyl transferase center and thus would serve to optimize ribosomal fidelity. This chain is Dual-specificity RNA methyltransferase RlmN, found in Bartonella quintana (strain Toulouse) (Rochalimaea quintana).